The following is a 208-amino-acid chain: Probable GTP-binding protein EngB (208 aa).

The 183-residue stretch at 23–205 (LTSEMVVLGR…RQTLLKYLLT (183 aa)) folds into the EngB-type G domain. GTP is bound by residues 31–38 (GRSNVGKS), 57–61 (GKTRL), 84–87 (DLPG), 154–157 (TKFD), and 182–184 (FNA). 2 residues coordinate Mg(2+): Ser-38 and Thr-59.

The protein belongs to the TRAFAC class TrmE-Era-EngA-EngB-Septin-like GTPase superfamily. EngB GTPase family. Mg(2+) is required as a cofactor.

Its function is as follows. Necessary for normal cell division and for the maintenance of normal septation. The polypeptide is Probable GTP-binding protein EngB (Helicobacter acinonychis (strain Sheeba)).